Consider the following 331-residue polypeptide: GTP 3',8-cyclase (331 aa).

Residues proline 6 to proline 234 form the Radical SAM core domain. Arginine 15 serves as a coordination point for GTP. Cysteine 22 and cysteine 26 together coordinate [4Fe-4S] cluster. Residue tyrosine 28 participates in S-adenosyl-L-methionine binding. A [4Fe-4S] cluster-binding site is contributed by cysteine 29. Arginine 66 serves as a coordination point for GTP. Glycine 70 is a binding site for S-adenosyl-L-methionine. Serine 97 contributes to the GTP binding site. Serine 121 provides a ligand contact to S-adenosyl-L-methionine. Residue lysine 158 participates in GTP binding. Methionine 192 is a binding site for S-adenosyl-L-methionine. [4Fe-4S] cluster contacts are provided by cysteine 258 and cysteine 261. Residue arginine 263–arginine 265 coordinates GTP. Position 275 (cysteine 275) interacts with [4Fe-4S] cluster.

The protein belongs to the radical SAM superfamily. MoaA family. In terms of assembly, monomer and homodimer. Requires [4Fe-4S] cluster as cofactor.

It catalyses the reaction GTP + AH2 + S-adenosyl-L-methionine = (8S)-3',8-cyclo-7,8-dihydroguanosine 5'-triphosphate + 5'-deoxyadenosine + L-methionine + A + H(+). Its pathway is cofactor biosynthesis; molybdopterin biosynthesis. In terms of biological role, catalyzes the cyclization of GTP to (8S)-3',8-cyclo-7,8-dihydroguanosine 5'-triphosphate. This chain is GTP 3',8-cyclase, found in Hydrogenovibrio crunogenus (strain DSM 25203 / XCL-2) (Thiomicrospira crunogena).